The chain runs to 413 residues: Elongation factor 1-alpha (413 aa).

The region spanning 5–211 is the tr-type G domain; that stretch reads KEHMNLAFIG…DDLEAPEKPV (207 aa). Residues 14–21 form a G1 region; it reads GHVDHGKS. 14–21 contacts GTP; sequence GHVDHGKS. Ser21 is a Mg(2+) binding site. The tract at residues 60 to 64 is G2; the sequence is GVTID. The G3 stretch occupies residues 81 to 84; it reads DCPG. GTP contacts are provided by residues 81 to 85 and 136 to 139; these read DCPGH and NKMD. Positions 136-139 are G4; sequence NKMD. The G5 stretch occupies residues 175–177; that stretch reads SAF.

This sequence belongs to the TRAFAC class translation factor GTPase superfamily. Classic translation factor GTPase family. EF-Tu/EF-1A subfamily.

Its subcellular location is the cytoplasm. The catalysed reaction is GTP + H2O = GDP + phosphate + H(+). Functionally, GTP hydrolase that promotes the GTP-dependent binding of aminoacyl-tRNA to the A-site of ribosomes during protein biosynthesis. The polypeptide is Elongation factor 1-alpha (Methanothermobacter thermautotrophicus (strain ATCC 29096 / DSM 1053 / JCM 10044 / NBRC 100330 / Delta H) (Methanobacterium thermoautotrophicum)).